The chain runs to 177 residues: uncharacterized protein (177 aa).

The protein resides in the plastid. It is found in the chloroplast. This is an uncharacterized protein from Chlorella vulgaris (Green alga).